A 331-amino-acid chain; its full sequence is Protein-methionine-sulfoxide reductase catalytic subunit MsrP (331 aa).

The tat-type signal signal peptide spans Met-1 to Ala-54. Residues Asn-86, Tyr-89–Glu-90, Cys-144, Ser-179, Asn-227, Arg-232, and Ser-243–Lys-245 each bind Mo-molybdopterin.

Belongs to the MsrP family. As to quaternary structure, heterodimer of a catalytic subunit (MsrP) and a heme-binding subunit (MsrQ). Mo-molybdopterin is required as a cofactor. Post-translationally, predicted to be exported by the Tat system. The position of the signal peptide cleavage has not been experimentally proven.

Its subcellular location is the periplasm. It catalyses the reaction L-methionyl-[protein] + a quinone + H2O = L-methionyl-(S)-S-oxide-[protein] + a quinol. It carries out the reaction L-methionyl-[protein] + a quinone + H2O = L-methionyl-(R)-S-oxide-[protein] + a quinol. Its function is as follows. Part of the MsrPQ system that repairs oxidized periplasmic proteins containing methionine sulfoxide residues (Met-O), using respiratory chain electrons. Thus protects these proteins from oxidative-stress damage caused by reactive species of oxygen and chlorine generated by the host defense mechanisms. MsrPQ is essential for the maintenance of envelope integrity under bleach stress, rescuing a wide series of structurally unrelated periplasmic proteins from methionine oxidation. The catalytic subunit MsrP is non-stereospecific, being able to reduce both (R-) and (S-) diastereoisomers of methionine sulfoxide. This chain is Protein-methionine-sulfoxide reductase catalytic subunit MsrP, found in Ralstonia nicotianae (strain ATCC BAA-1114 / GMI1000) (Ralstonia solanacearum).